Consider the following 313-residue polypeptide: Protein-methionine-sulfoxide reductase catalytic subunit MsrP (313 aa).

Positions 1–46 form a signal peptide, tat-type signal; the sequence is MPSYRAPKIAAAEITPERFFLDRRTFIAAAAGSLALSVPKPSRAAA. Mo-molybdopterin-binding positions include Asn70, 73 to 74, Cys127, Thr162, Asn212, Arg217, and 228 to 230; these read YE and GIK.

This sequence belongs to the MsrP family. In terms of assembly, heterodimer of a catalytic subunit (MsrP) and a heme-binding subunit (MsrQ). Mo-molybdopterin serves as cofactor. In terms of processing, predicted to be exported by the Tat system. The position of the signal peptide cleavage has not been experimentally proven.

Its subcellular location is the periplasm. The catalysed reaction is L-methionyl-[protein] + a quinone + H2O = L-methionyl-(S)-S-oxide-[protein] + a quinol. It catalyses the reaction L-methionyl-[protein] + a quinone + H2O = L-methionyl-(R)-S-oxide-[protein] + a quinol. Functionally, part of the MsrPQ system that repairs oxidized periplasmic proteins containing methionine sulfoxide residues (Met-O), using respiratory chain electrons. Thus protects these proteins from oxidative-stress damage caused by reactive species of oxygen and chlorine generated by the host defense mechanisms. MsrPQ is essential for the maintenance of envelope integrity under bleach stress, rescuing a wide series of structurally unrelated periplasmic proteins from methionine oxidation. The catalytic subunit MsrP is non-stereospecific, being able to reduce both (R-) and (S-) diastereoisomers of methionine sulfoxide. The polypeptide is Protein-methionine-sulfoxide reductase catalytic subunit MsrP (Rhizobium meliloti (strain 1021) (Ensifer meliloti)).